Consider the following 238-residue polypeptide: 2-phytyl-1,4-naphtoquinone methyltransferase (238 aa).

The protein belongs to the class I-like SAM-binding methyltransferase superfamily. MenG/UbiE family.

It catalyses the reaction demethylphylloquinol + S-adenosyl-L-methionine = phylloquinol + S-adenosyl-L-homocysteine + H(+). The protein operates within cofactor biosynthesis; phylloquinone biosynthesis. Functionally, methyltransferase required for the conversion of 2-phytyl-1,4-beta-naphthoquinol to phylloquinol. The sequence is that of 2-phytyl-1,4-naphtoquinone methyltransferase from Synechocystis sp. (strain ATCC 27184 / PCC 6803 / Kazusa).